Consider the following 210-residue polypeptide: RNA chaperone ProQ (210 aa).

The segment at 118–146 (KAAKPEKKRPARRVAAKGQHAKETTTNKA) is disordered. Positions 123–132 (EKKRPARRVA) are enriched in basic residues.

Belongs to the ProQ family.

The protein resides in the cytoplasm. RNA chaperone with significant RNA binding, RNA strand exchange and RNA duplexing activities. This Pasteurella multocida (strain Pm70) protein is RNA chaperone ProQ.